A 423-amino-acid polypeptide reads, in one-letter code: Histidine--tRNA ligase (423 aa).

It belongs to the class-II aminoacyl-tRNA synthetase family. In terms of assembly, homodimer.

The protein resides in the cytoplasm. The enzyme catalyses tRNA(His) + L-histidine + ATP = L-histidyl-tRNA(His) + AMP + diphosphate + H(+). The chain is Histidine--tRNA ligase (hisS) from Mycobacterium bovis (strain ATCC BAA-935 / AF2122/97).